Consider the following 141-residue polypeptide: Mu-like prophage FluMu protein gp36 (141 aa).

The protein to phage Mu protein gp36.

The protein is Mu-like prophage FluMu protein gp36 of Haemophilus influenzae (strain ATCC 51907 / DSM 11121 / KW20 / Rd).